The following is a 332-amino-acid chain: Aspartate carbamoyltransferase catalytic subunit (332 aa).

Residues methionine 1–aspartate 20 are disordered. Carbamoyl phosphate-binding residues include arginine 72 and threonine 73. L-aspartate is bound at residue lysine 100. Carbamoyl phosphate-binding residues include arginine 122, histidine 152, and glutamine 155. The L-aspartate site is built by arginine 186 and arginine 241. Positions 282 and 283 each coordinate carbamoyl phosphate.

It belongs to the aspartate/ornithine carbamoyltransferase superfamily. ATCase family. Heterododecamer (2C3:3R2) of six catalytic PyrB chains organized as two trimers (C3), and six regulatory PyrI chains organized as three dimers (R2).

The enzyme catalyses carbamoyl phosphate + L-aspartate = N-carbamoyl-L-aspartate + phosphate + H(+). The protein operates within pyrimidine metabolism; UMP biosynthesis via de novo pathway; (S)-dihydroorotate from bicarbonate: step 2/3. Functionally, catalyzes the condensation of carbamoyl phosphate and aspartate to form carbamoyl aspartate and inorganic phosphate, the committed step in the de novo pyrimidine nucleotide biosynthesis pathway. The polypeptide is Aspartate carbamoyltransferase catalytic subunit (Psychrobacter sp. (strain TAD1)).